The sequence spans 499 residues: MNYFPWLTLIVVFPIAAGSLIFFLPHRGNKVTRGYTIYICVLELLLTTYAFCYNFQLDDPLIQLAEDYKWITFFEFDWRLGIDGLSIGPILLTGFITTLATLAARPVTLNSRLFHFLMLAMYSGQIGSFSSRDLLLFFIMWELELIPVYLLLSVWGGKKRLYSATKFILYTAGGSVFLLIGVLGIGLYGSNEPTLNLETLVNRSYPVALEIIFYIGFFIAFAVKLPIIPFHTWLPDTHGEAHYSTCMLLAGILLKMGAYGLIRINMELLPHAHSIFSPWFMIVGTVQIIYAASTSPGQRNLKKRIAYSSVSHMGFIILGIGSITDTGLNGAVLQIISHGLISAALFFLAGTSYDRIRFAYLDEMGGLAIPIPKIFTLFSILSMASLALPGMSGFVAELIVFFGIITSQKFFLMPKIVITFVMAIGMILTPIYSLSMLRQMFYGYKLFNAPNSYFFDSGPRELFVLISILLPVIGIGIYPDFVLSLSADKAEAIISNFFL.

The next 14 helical transmembrane spans lie at 4–24 (FPWLTLIVVFPIAAGSLIFFL), 35–55 (YTIYICVLELLLTTYAFCYNF), 84–104 (GLSIGPILLTGFITTLATLAA), 111–129 (SRLFHFLMLAMYSGQIGSF), 134–154 (LLLFFIMWELELIPVYLLLSV), 167–187 (FILYTAGGSVFLLIGVLGIGL), 208–228 (ALEIIFYIGFFIAFAVKLPII), 242–262 (HYSTCMLLAGILLKMGAYGLI), 272–292 (AHSIFSPWFMIVGTVQIIYAA), 305–325 (IAYSSVSHMGFIILGIGSITD), 330–350 (GAVLQIISHGLISAALFFLAG), 386–406 (LALPGMSGFVAELIVFFGIIT), 416–436 (IVITFVMAIGMILTPIYSLSM), and 462–482 (LFVLISILLPVIGIGIYPDFV).

It belongs to the complex I subunit 4 family.

It localises to the plastid. The protein localises to the chloroplast thylakoid membrane. The catalysed reaction is a plastoquinone + NADH + (n+1) H(+)(in) = a plastoquinol + NAD(+) + n H(+)(out). The enzyme catalyses a plastoquinone + NADPH + (n+1) H(+)(in) = a plastoquinol + NADP(+) + n H(+)(out). The polypeptide is NAD(P)H-quinone oxidoreductase chain 4, chloroplastic (Citrus sinensis (Sweet orange)).